The following is an 816-amino-acid chain: H(+)/Cl(-) exchange transporter 5 (816 aa).

The segment at 1–26 (MAMWQGAMDNRGFQQGSFSSFQNSSS) is disordered. The Cytoplasmic portion of the chain corresponds to 1 to 124 (MAMWQGAMDN…WALIHSVSDA (124 aa)). A compositionally biased stretch (low complexity) spans 12–25 (GFQQGSFSSFQNSS). Helical transmembrane passes span 125 to 162 (FSGWLLMLLIGLLSGSLAGLIDISAHWMTDLKEGICTG) and 208 to 231 (VNYFMYVLWALLFAFLAVSLVKVF). Positions 237–241 (GSGIP) match the Selectivity filter part_1 motif. Ser-238 is a binding site for chloride. The segment at residues 240–247 (IPEIKTIL) is an intramembrane region (helical). 2 helical membrane passes run 256–275 (LGKWTLVIKTITLVLAVSSG) and 281–300 (EGPLVHVACCCGNILCHCFN). A Selectivity filter part_2 motif is present at residues 279 to 283 (GKEGP). Intramembrane regions (helical) lie at residues 312 to 324 (VLSAAAAAGVSVA) and 328 to 336 (PIGGVLFSL). The next 5 membrane-spanning stretches (helical) occupy residues 348 to 366 (LWRSFFAALVAAFTLRSIN), 389 to 415 (LVPFILLGIFGGLWGALFIRTNIAWCR), 422 to 442 (LGKYPVIEVLVVTAITAILAF), 498 to 518 (MWQLALTLILKIVITIFTFGM), and 523 to 542 (GLFIPSMAVGAIAGRLLGVG). A Selectivity filter part_3 motif is present at residues 523–527 (GLFIP). Position 525 (Phe-525) interacts with chloride. The segment at residues 570–584 (GLYAMVGAAACLGGV) is an intramembrane region (helical). Residues 585–587 (TRM) constitute an intramembrane region (note=Loop between two helices). An intramembrane region (helical) is located at residues 588-599 (TVSLVVIMFELT). The segment at residues 600–604 (GGLEY) is an intramembrane region (note=Loop between two helices). The chain crosses the membrane as a helical span at residues 605-622 (IVPLMAAAMTSKWVADAL). At 623–816 (GREGIYDAHI…NQDPDSILFN (194 aa)) the chain is on the cytoplasmic side. Tyr-628 is a chloride binding site. 2 CBS domains span residues 656 to 720 (MKPR…ARKK) and 752 to 812 (ILDL…DPDS). ATP-binding positions include Thr-666, 687 to 689 (YSG), and 794 to 797 (TKKD).

It belongs to the chloride channel (TC 2.A.49) family. ClC-5/CLCN5 subfamily. In terms of assembly, interacts with NEDD4 and NEDD4L. In terms of processing, ubiquitinated by NEDD4L in the presence of albumin; which promotes endocytosis and proteasomal degradation. In terms of tissue distribution, kidney. Moderately expressed in aortic vascular smooth muscle and endothelial cells, and at a slightly higher level in the coronary vascular smooth muscle.

Its subcellular location is the golgi apparatus membrane. It is found in the endosome membrane. It localises to the cell membrane. The catalysed reaction is 2 chloride(in) + H(+)(out) = 2 chloride(out) + H(+)(in). In terms of biological role, proton-coupled chloride transporter. Functions as antiport system and exchanges chloride ions against protons. Important for normal acidification of the endosome lumen. May play an important role in renal tubular function. The CLC channel family contains both chloride channels and proton-coupled anion transporters that exchange chloride or another anion for protons. The absence of conserved gating glutamate residues is typical for family members that function as channels. This Homo sapiens (Human) protein is H(+)/Cl(-) exchange transporter 5.